The chain runs to 2696 residues: Histone-lysine N-methyltransferase, H3 lysine-36 specific (2696 aa).

Serine 117 is subject to Phosphoserine. 2 disordered regions span residues methionine 207–alanine 252 and aspartate 281–glutamine 311. Over residues glutamine 236–asparagine 248 the composition is skewed to basic and acidic residues. 2 stretches are compositionally biased toward polar residues: residues aspartate 281–glycine 290 and glycine 297–glutamate 306. The PWWP 1 domain occupies valine 323–glycine 388. A phosphoserine mark is found at serine 483 and serine 486. Residues alanine 487–glycine 514 form a disordered region. Phosphoserine is present on serine 766. The segment at leucine 872–serine 891 is disordered. Residue lysine 906 forms a Glycyl lysine isopeptide (Lys-Gly) (interchain with G-Cter in SUMO2) linkage. Disordered stretches follow at residues tyrosine 936 to serine 1035, valine 1067 to isoleucine 1093, serine 1112 to glycine 1134, serine 1243 to lysine 1272, proline 1294 to valine 1344, serine 1382 to aspartate 1428, and lysine 1480 to glutamate 1534. The segment covering serine 948–serine 961 has biased composition (low complexity). The segment covering glycine 971 to glycine 982 has biased composition (polar residues). Basic and acidic residues-rich tracts occupy residues serine 1000–threonine 1017, glycine 1070–proline 1090, and serine 1112–glutamate 1124. Positions lysine 1300–glutamate 1314 are enriched in basic and acidic residues. Over residues serine 1323–serine 1337 the composition is skewed to polar residues. Lysine 1339 is covalently cross-linked (Glycyl lysine isopeptide (Lys-Gly) (interchain with G-Cter in SUMO2)). Phosphoserine is present on serine 1510. Over residues glutamate 1513–proline 1523 the composition is skewed to basic and acidic residues. 3 PHD-type zinc fingers span residues glutamate 1543–glycine 1589, isoleucine 1590–alanine 1646, and valine 1707–glycine 1751. In terms of domain architecture, PWWP 2 spans tyrosine 1756 to glycine 1818. An AWS domain is found at serine 1890–glutamine 1940. Positions proline 1942 to asparagine 2059 constitute an SET domain. S-adenosyl-L-methionine-binding positions include arginine 1952–tryptophan 1954, threonine 1994–tyrosine 1997, asparagine 2020–histidine 2021, asparagine 2065, and lysine 2071. The tract at residues leucine 2060–glycine 2066 is inhibits enzyme activity in the absence of bound histone. The Post-SET domain maps to glycine 2066 to glycine 2082. Residues alanine 2091 to glycine 2111 form a disordered region. Over residues lysine 2097–arginine 2108 the composition is skewed to basic residues. The PHD-type 4; atypical zinc-finger motif lies at glutamate 2118–aspartate 2165. Positions leucine 2213–glutamate 2422 are disordered. A compositionally biased stretch (pro residues) spans valine 2222–proline 2232. Residues arginine 2281–aspartate 2298 show a composition bias toward basic and acidic residues. The segment covering glycine 2303 to arginine 2314 has biased composition (polar residues). The span at serine 2330 to glutamine 2348 shows a compositional bias: low complexity. Position 2369 is a phosphoserine (serine 2369). Composition is skewed to polar residues over residues arginine 2371 to proline 2381 and isoleucine 2394 to aspartate 2404. Threonine 2462 bears the Phosphothreonine mark. 4 disordered regions span residues arginine 2464–histidine 2499, threonine 2553–glycine 2575, lysine 2595–lysine 2616, and leucine 2665–lysine 2696. Serine 2471 is modified (phosphoserine). Residue lysine 2616 forms a Glycyl lysine isopeptide (Lys-Gly) (interchain with G-Cter in SUMO2) linkage. The span at glutamate 2674–serine 2686 shows a compositional bias: polar residues.

This sequence belongs to the class V-like SAM-binding methyltransferase superfamily. In terms of assembly, interacts with the ligand-binding domains of RARA and THRA in the absence of ligand; in the presence of ligand the interaction is severely disrupted but some binding still occurs. Interacts with the ligand-binding domains of RXRA and ESRRA only in the presence of ligand. Interacts with ZNF496. Interacts with AR DNA- and ligand-binding domains. In terms of tissue distribution, expressed in the fetal/adult brain, kidney, skeletal muscle, spleen, and the thymus, and faintly in the lung.

The protein localises to the nucleus. Its subcellular location is the chromosome. It catalyses the reaction L-lysyl(36)-[histone H3] + 2 S-adenosyl-L-methionine = N(6),N(6)-dimethyl-L-lysyl(36)-[histone H3] + 2 S-adenosyl-L-homocysteine + 2 H(+). Histone methyltransferase that dimethylates Lys-36 of histone H3 (H3K36me2). Transcriptional intermediary factor capable of both negatively or positively influencing transcription, depending on the cellular context. This is Histone-lysine N-methyltransferase, H3 lysine-36 specific (NSD1) from Homo sapiens (Human).